A 287-amino-acid chain; its full sequence is Putative sugar uptake protein M6_Spy1874 (287 aa).

A run of 10 helical transmembrane segments spans residues 4-26 (IFYALIPMFTWGSIGFVSNKIGG), 33-50 (LGMTFGALLFSLAVWLIV), 55-72 (TLQLWLFGILGGFIWSIG), 85-107 (VSVANPLSSGSQLVLGSLIGVLV), 117-134 (FVVGSLALLLLIIGFYFS), 154-171 (FRALTYSTIGYVMYAVLF), 181-200 (SVILPMAVGMVLGAITFMSF), 207-229 (YVIKNSVVGLLWGIGNIFMLLAA), 234-256 (LAIAFSFSQLGAIISIVGGILFL), and 268-285 (VVTGIICFIVGAILLGVV).

The protein belongs to the GRP transporter (TC 2.A.7.5) family.

It localises to the cell membrane. The protein is Putative sugar uptake protein M6_Spy1874 of Streptococcus pyogenes serotype M6 (strain ATCC BAA-946 / MGAS10394).